A 245-amino-acid chain; its full sequence is Mitochondrial import inner membrane translocase subunit Tim21 (245 aa).

A mitochondrion-targeting transit peptide spans 1 to 18 (MICAFLRVVRHAEKLHGS). The tract at residues 64-97 (FWTQGPDPRKAKEDSSKQVSINRNQREETGVSTS) is disordered. Residues 70-79 (DPRKAKEDSS) are compositionally biased toward basic and acidic residues. A helical membrane pass occupies residues 108–128 (TYLIVVLFGVSITGSLLYTIF).

It belongs to the TIM21 family. As to quaternary structure, component of the TIM23 complex. Component of the MITRAC (mitochondrial translation regulation assembly intermediate of cytochrome c oxidase complex) complex, the core components of this complex being COA3/MITRAC12 and COX14. Interacts with COA3 and MT-CO1/COX1.

The protein resides in the mitochondrion membrane. Participates in the translocation of transit peptide-containing proteins across the mitochondrial inner membrane. Also required for assembly of mitochondrial respiratory chain complex I and complex IV as component of the MITRAC (mitochondrial translation regulation assembly intermediate of cytochrome c oxidase complex) complex. Probably shuttles between the presequence translocase and respiratory-chain assembly intermediates in a process that promotes incorporation of early nuclear-encoded subunits into these complexes. In Rattus norvegicus (Rat), this protein is Mitochondrial import inner membrane translocase subunit Tim21 (Timm21).